A 167-amino-acid polypeptide reads, in one-letter code: Small ribosomal subunit protein uS9 (167 aa).

Disordered regions lie at residues 1–45 and 137–167; these read MSEY…GGAT and KAGF…FSKR. The segment covering 9–19 has biased composition (acidic residues); it reads DTVEDITESDE. Polar residues predominate over residues 20–36; sequence FTGTYTSESSTPATGGN. Over residues 143-152 the composition is skewed to basic and acidic residues; that stretch reads RDPRATERKK. The segment covering 153-167 has biased composition (basic residues); the sequence is AGLKKARKAPQFSKR.

This sequence belongs to the universal ribosomal protein uS9 family.

The polypeptide is Small ribosomal subunit protein uS9 (Kineococcus radiotolerans (strain ATCC BAA-149 / DSM 14245 / SRS30216)).